The sequence spans 146 residues: Mediator of RNA polymerase II transcription subunit 10 (146 aa).

This sequence belongs to the Mediator complex subunit 10 family. Component of the Mediator complex.

Its subcellular location is the nucleus. Functionally, component of the Mediator complex, a coactivator involved in the regulated transcription of nearly all RNA polymerase II-dependent genes. Mediator functions as a bridge to convey information from gene-specific regulatory proteins to the basal RNA polymerase II transcription machinery. Mediator is recruited to promoters by direct interactions with regulatory proteins and serves as a scaffold for the assembly of a functional preinitiation complex with RNA polymerase II and the general transcription factors. This is Mediator of RNA polymerase II transcription subunit 10 (NUT2) from Scheffersomyces stipitis (strain ATCC 58785 / CBS 6054 / NBRC 10063 / NRRL Y-11545) (Yeast).